The primary structure comprises 198 residues: Holliday junction resolvase RecU (198 aa).

Positions 1–22 are disordered; the sequence is MVNYPHKVSSQKRQTSLSQPKN. Polar residues predominate over residues 11–22; the sequence is QKRQTSLSQPKN. Positions 81, 83, 96, and 115 each coordinate Mg(2+).

The protein belongs to the RecU family. The cofactor is Mg(2+).

Its subcellular location is the cytoplasm. The catalysed reaction is Endonucleolytic cleavage at a junction such as a reciprocal single-stranded crossover between two homologous DNA duplexes (Holliday junction).. Functionally, endonuclease that resolves Holliday junction intermediates in genetic recombination. Cleaves mobile four-strand junctions by introducing symmetrical nicks in paired strands. Promotes annealing of linear ssDNA with homologous dsDNA. Required for DNA repair, homologous recombination and chromosome segregation. The chain is Holliday junction resolvase RecU from Streptococcus pneumoniae (strain P1031).